The primary structure comprises 221 residues: Transmembrane emp24 domain-containing protein 3 (221 aa).

The first 30 residues, 1–30 (MGNEVPRASSFQMLMLLLLLLLLRAERLRG), serve as a signal peptide directing secretion. Topologically, residues 31 to 184 (AELTFELPDN…RAEDLNSRVS (154 aa)) are lumenal. Residues 42 to 124 (KQCFHEEVEQ…HKTVYFDFQV (83 aa)) form the GOLD domain. A Dimethylated arginine modification is found at Arg-103. The helical transmembrane segment at 185-205 (YWSVGETIALFVVSFSQVLLL) threads the bilayer. Topologically, residues 206 to 221 (KSFFTEKRPINRAVHS) are cytoplasmic. Positions 208-209 (FF) match the COPII vesicle coat-binding motif. A COPI vesicle coat-binding motif is present at residues 208-221 (FFTEKRPINRAVHS).

This sequence belongs to the EMP24/GP25L family. As to quaternary structure, monomer in endoplasmic reticulum, endoplasmic reticulum-Golgi intermediate compartment and cis-Golgi network. Interacts (via C-terminus) with COPG1; the interaction involves dimeric TMED3; however, there are conflicting reports on the interaction. Interacts with GORASP1 and GORASP2.

The protein localises to the endoplasmic reticulum-Golgi intermediate compartment membrane. It is found in the golgi apparatus. It localises to the cis-Golgi network membrane. The protein resides in the golgi stack membrane. Its subcellular location is the endoplasmic reticulum membrane. The protein localises to the cytoplasmic vesicle. It is found in the COPI-coated vesicle membrane. Potential role in vesicular protein trafficking, mainly in the early secretory pathway. Contributes to the coupled localization of TMED2 and TMED10 in the cis-Golgi network. The protein is Transmembrane emp24 domain-containing protein 3 (Tmed3) of Rattus norvegicus (Rat).